A 350-amino-acid chain; its full sequence is WD repeat-containing protein DWA2 (350 aa).

6 WD repeats span residues 39-79 (KEEN…FDQR), 118-158 (AHVG…KSAE), 166-205 (GMRH…KNNS), 206-246 (IERA…FPVQ), 250-290 (GHTH…EHKT), and 311-350 (DYED…LPRR).

In terms of assembly, interacts with ABI5 and DDB1A and DWA1.

It is found in the nucleus. It functions in the pathway protein modification; protein ubiquitination. Functionally, component of the CUL4-RBX1-DDB1-DWA1/DWA2 E3 ubiquitin-protein ligase complex that acts as a negative regulator in abscisic acid (ABA) signaling. May function as the substrate recognition module within this complex leading to ABI5 degradation. Functionally redundant with DWA1. The chain is WD repeat-containing protein DWA2 (DWA2) from Arabidopsis thaliana (Mouse-ear cress).